The chain runs to 437 residues: UDP-N-acetylmuramate--L-alanine ligase (437 aa).

114-120 is a binding site for ATP; that stretch reads GTHGKTS.

Belongs to the MurCDEF family.

It is found in the cytoplasm. The catalysed reaction is UDP-N-acetyl-alpha-D-muramate + L-alanine + ATP = UDP-N-acetyl-alpha-D-muramoyl-L-alanine + ADP + phosphate + H(+). The protein operates within cell wall biogenesis; peptidoglycan biosynthesis. Functionally, cell wall formation. In Lactobacillus acidophilus (strain ATCC 700396 / NCK56 / N2 / NCFM), this protein is UDP-N-acetylmuramate--L-alanine ligase.